Here is a 104-residue protein sequence, read N- to C-terminus: Small ubiquitin-related modifier 3 (104 aa).

Glycyl lysine isopeptide (Lys-Gly) (interchain with G-Cter in SUMO2) cross-links involve residues Lys5 and Lys7. Residue Lys11 forms a Glycyl lysine isopeptide (Lys-Gly) (interchain with G-Cter in SUMO); alternate linkage. Residue Lys11 forms a Glycyl lysine isopeptide (Lys-Gly) (interchain with G-Cter in SUMO2); alternate linkage. In terms of domain architecture, Ubiquitin-like spans 15–92 (DHINLKVAGQ…IDVFQQQTGG (78 aa)). Gly92 participates in a covalent cross-link: Glycyl lysine isopeptide (Gly-Lys) (interchain with K-? in acceptor proteins). The propeptide occupies 93–104 (SRVASCLLGSGL).

This sequence belongs to the ubiquitin family. SUMO subfamily. As to quaternary structure, interacts with SAE2 and UBE2I. Covalently attached to a number of proteins. Interacts with USP25 (via ts SIM domain); the interaction sumoylates USP25 and inhibits its ubiquitin hydrolyzing activity. Interacts with BMAL1. Post-translationally, polymeric chains can be formed through Lys-11 cross-linking. In terms of processing, cleavage of precursor form by SENP1, SENP2 or SENP5 is necessary for function.

It is found in the cytoplasm. Its subcellular location is the nucleus. It localises to the PML body. Its function is as follows. Ubiquitin-like protein which can be covalently attached to target lysines either as a monomer or as a lysine-linked polymer. Does not seem to be involved in protein degradation and may function as an antagonist of ubiquitin in the degradation process. Plays a role in a number of cellular processes such as nuclear transport, DNA replication and repair, mitosis and signal transduction. Covalent attachment to its substrates requires prior activation by the E1 complex SAE1-SAE2 and linkage to the E2 enzyme UBE2I, and can be promoted by an E3 ligase such as PIAS1-4, RANBP2 or CBX4. Plays a role in the regulation of sumoylation status of SETX. The chain is Small ubiquitin-related modifier 3 (SUMO3) from Bos taurus (Bovine).